Here is a 142-residue protein sequence, read N- to C-terminus: rRNA-processing protein FYV7 (142 aa).

Disordered stretches follow at residues 1–23 (MHPN…EAKS), 47–67 (EGLQ…TKKK), and 99–142 (KIES…NEMS). A coiled-coil region spans residues 94 to 116 (QAKLEKIESNSKERALKREQLKK). Basic and acidic residues-rich tracts occupy residues 99–115 (KIES…EQLK) and 131–142 (DLLDKIKKNEMS).

This sequence belongs to the FYV7 family.

The protein localises to the nucleus. The protein resides in the nucleolus. Involved in the processing of the 20S pre-rRNA. In Candida albicans (strain SC5314 / ATCC MYA-2876) (Yeast), this protein is rRNA-processing protein FYV7 (FYV7).